Reading from the N-terminus, the 272-residue chain is GTP cyclohydrolase FolE2 (272 aa).

The protein belongs to the GTP cyclohydrolase IV family.

The catalysed reaction is GTP + H2O = 7,8-dihydroneopterin 3'-triphosphate + formate + H(+). Its pathway is cofactor biosynthesis; 7,8-dihydroneopterin triphosphate biosynthesis; 7,8-dihydroneopterin triphosphate from GTP: step 1/1. Converts GTP to 7,8-dihydroneopterin triphosphate. This chain is GTP cyclohydrolase FolE2, found in Polynucleobacter asymbioticus (strain DSM 18221 / CIP 109841 / QLW-P1DMWA-1) (Polynucleobacter necessarius subsp. asymbioticus).